Reading from the N-terminus, the 303-residue chain is Glutathione transport system permease protein GsiD (303 aa).

The next 6 helical transmembrane spans lie at 40 to 60 (AMTAALFVILLIVVAIFARWI), 105 to 125 (LAAGVFAVFIGAAIGTLLGLL), 144 to 164 (LFAFPGILLAIAVVAVLGSGI), 165 to 185 (ANVIIAVAIFSIPAFARLVRG), 222 to 242 (IVVFFTMRIGTSIISAASLSF), and 266 to 286 (VIAPHVAVFPALAIFLTVLAF). An ABC transmembrane type-1 domain is found at 101–290 (AQISLAAGVF…LTVLAFNLLG (190 aa)).

The protein belongs to the binding-protein-dependent transport system permease family. In terms of assembly, the complex is composed of two ATP-binding proteins (GsiA), two transmembrane proteins (GsiC and GsiD) and a solute-binding protein (GsiB).

The protein resides in the cell inner membrane. Functionally, part of the ABC transporter complex GsiABCD involved in glutathione import. Probably responsible for the translocation of the substrate across the membrane. In Escherichia coli O157:H7, this protein is Glutathione transport system permease protein GsiD.